Consider the following 591-residue polypeptide: Probable anion transporter 4, chloroplastic (591 aa).

The disordered stretch occupies residues 1-38; the sequence is MAMGAVLSSRTFASPLSSSGKQHPPQNNKCTCSSPPTR. Residues 1-76 constitute a chloroplast transit peptide; sequence MAMGAVLSSR…LSARFHQPVV (76 aa). The segment covering 8–36 has biased composition (polar residues); the sequence is SSRTFASPLSSSGKQHPPQNNKCTCSSPP. 11 consecutive transmembrane segments (helical) span residues 184 to 204, 220 to 240, 249 to 269, 271 to 291, 313 to 333, 336 to 356, 402 to 422, 440 to 460, 475 to 495, 531 to 551, and 565 to 585; these read VVLL…NMSI, VGLI…LGGI, VVLG…PLAA, IGLP…GVAM, LVYS…PLLI, FGWP…FALW, VWAL…LLTW, LLCV…GWIA, KIMQ…LSKV, AGVL…FGTA, and VFQV…VFST.

It belongs to the major facilitator superfamily. Sodium/anion cotransporter (TC 2.A.1.14) family.

The protein resides in the plastid. It is found in the chloroplast membrane. In terms of biological role, probable anion transporter. This chain is Probable anion transporter 4, chloroplastic (PHT4;4), found in Oryza sativa subsp. japonica (Rice).